A 249-amino-acid chain; its full sequence is Diaminopimelate epimerase (249 aa).

Substrate contacts are provided by Asn-11 and Asn-60. Catalysis depends on Cys-69, which acts as the Proton donor. Substrate is bound by residues 70-71 (GN), Asn-164, and 182-183 (ER). Cys-192 acts as the Proton acceptor in catalysis. Substrate is bound at residue 193 to 194 (GT).

This sequence belongs to the diaminopimelate epimerase family. Homodimer.

It is found in the cytoplasm. The enzyme catalyses (2S,6S)-2,6-diaminopimelate = meso-2,6-diaminopimelate. It functions in the pathway amino-acid biosynthesis; L-lysine biosynthesis via DAP pathway; DL-2,6-diaminopimelate from LL-2,6-diaminopimelate: step 1/1. Catalyzes the stereoinversion of LL-2,6-diaminopimelate (L,L-DAP) to meso-diaminopimelate (meso-DAP), a precursor of L-lysine and an essential component of the bacterial peptidoglycan. This Campylobacter jejuni subsp. doylei (strain ATCC BAA-1458 / RM4099 / 269.97) protein is Diaminopimelate epimerase.